A 321-amino-acid chain; its full sequence is Olfactory receptor 51G1 (321 aa).

Topologically, residues Met-1–Gly-27 are extracellular. Residue Asn-6 is glycosylated (N-linked (GlcNAc...) asparagine). The chain crosses the membrane as a helical span at residues Trp-28–Leu-48. Residues His-49–Thr-56 lie on the Cytoplasmic side of the membrane. Residues Leu-57–Leu-77 form a helical membrane-spanning segment. The Extracellular portion of the chain corresponds to Ser-78–Thr-101. Cys-99 and Cys-191 are oxidised to a cystine. The chain crosses the membrane as a helical span at residues Gln-102–Ile-122. Residues Asp-123–Ala-141 are Cytoplasmic-facing. Residues Cys-142 to Pro-162 traverse the membrane as a helical segment. Over Phe-163 to His-198 the chain is Extracellular. The helical transmembrane segment at Ile-199–Ser-219 threads the bilayer. Residues Tyr-220–Ala-239 are Cytoplasmic-facing. A helical membrane pass occupies residues Leu-240–Leu-260. Topologically, residues Ser-261 to His-275 are extracellular. A helical transmembrane segment spans residues Leu-276–Ile-296. Over Lys-297 to Asp-321 the chain is Cytoplasmic.

This sequence belongs to the G-protein coupled receptor 1 family.

Its subcellular location is the cell membrane. In terms of biological role, odorant receptor. This chain is Olfactory receptor 51G1 (OR51G1), found in Homo sapiens (Human).